We begin with the raw amino-acid sequence, 72 residues long: Toxin Cll8 (72 aa).

The first 4 residues, 1–4 (TVSA), serve as a signal peptide directing secretion. One can recognise an LCN-type CS-alpha/beta domain in the interval 5-70 (KEGYLVKKSN…TWPLPNKSCG (66 aa)). Intrachain disulfides connect cysteine 16–cysteine 69, cysteine 20–cysteine 45, cysteine 29–cysteine 50, and cysteine 33–cysteine 52. Cysteine 69 carries the post-translational modification Cysteine amide.

It belongs to the long (4 C-C) scorpion toxin superfamily. Sodium channel inhibitor family. Beta subfamily. Expressed by the venom gland.

Its subcellular location is the secreted. Functionally, beta toxins bind voltage-independently at site-4 of sodium channels (Nav) and shift the voltage of activation toward more negative potentials thereby affecting sodium channel activation and promoting spontaneous and repetitive firing. This Centruroides limpidus (Mexican scorpion) protein is Toxin Cll8.